The following is a 304-amino-acid chain: Nucleotide-binding protein SH2124 (304 aa).

19–26 (GLSGAGKS) contributes to the ATP binding site. 70–73 (DLRG) provides a ligand contact to GTP.

Belongs to the RapZ-like family.

Displays ATPase and GTPase activities. This Staphylococcus haemolyticus (strain JCSC1435) protein is Nucleotide-binding protein SH2124.